An 804-amino-acid polypeptide reads, in one-letter code: Ribonucleoside-diphosphate reductase large subunit-like protein (804 aa).

This sequence belongs to the ribonucleoside diphosphate reductase large chain family.

It localises to the virion. The protein resides in the host cytoplasm. Functionally, does not possess a ribonucleotide reductase activity. Betaherpesviruses probably use another strategy to expand the dNTP pool in a quiescent host cell. This is Ribonucleoside-diphosphate reductase large subunit-like protein from Homo sapiens (Human).